Consider the following 208-residue polypeptide: Na(+)-translocating NADH-quinone reductase subunit D (208 aa).

5 consecutive transmembrane segments (helical) span residues 42 to 62 (IVMT…ISLI), 70 to 90 (VRII…DQIL), 103 to 123 (VFVG…AFAM), 131 to 151 (FVDG…VAFI), and 178 to 198 (NGLF…IWGI).

Belongs to the NqrDE/RnfAE family. As to quaternary structure, composed of six subunits; NqrA, NqrB, NqrC, NqrD, NqrE and NqrF.

It localises to the cell inner membrane. The catalysed reaction is a ubiquinone + n Na(+)(in) + NADH + H(+) = a ubiquinol + n Na(+)(out) + NAD(+). Its function is as follows. NQR complex catalyzes the reduction of ubiquinone-1 to ubiquinol by two successive reactions, coupled with the transport of Na(+) ions from the cytoplasm to the periplasm. NqrA to NqrE are probably involved in the second step, the conversion of ubisemiquinone to ubiquinol. In Pasteurella multocida (strain Pm70), this protein is Na(+)-translocating NADH-quinone reductase subunit D.